We begin with the raw amino-acid sequence, 521 residues long: MELNFKSIIFLVFVSLTLYWVYRILDWVWFKPKKLEKCLREQGFKGNPYRLFLGDQYDSGKLIRQALTKPIGVEEDVKKRIVPHILKTVGTHGKKSFMWVGRIPRVNITDPELIKEVLTKYYKFQKNHHDLDPITKLLLTGIGSLEGDPWAKRRKIINAAFHFEKLKLMLPAFYLSCRDMVTKWDNKVPEGGSAEVDVWHDIETLTGDVISRTLFGSNFEEGRRIFELMKELTALTIDVIRSVYIPGQRFLPTKRNNRMRAIDKEVRVRITEIINKKMKVMKSGEAASAADDFLGILLECNLNEIKEQGNNKSAGMTIGEIIGECKLFYFAGQDTTSTLLVWTMVLLSRFPEWQTRAREEVFQVFGNKTPDYDGISHLKVITMILYEVLRLYTPVAELTKVAHEATQLGKYFIPAGVQLMMPQILLHHDPEIWGEDVMEFKPERFAEGVLKATKSQGSFFPFSLGPRMCIGQNFALLEAKMAMSLILRRFSFELSPSYVHAPFTLITMQPQYGAHLILHKL.

A helical membrane pass occupies residues 8 to 28 (IIFLVFVSLTLYWVYRILDWV). Asn-107 and Asn-311 each carry an N-linked (GlcNAc...) asparagine glycan. Cys-469 serves as a coordination point for heme.

It belongs to the cytochrome P450 family. Mostly present in actively growing aerial organs, including leaves, flower buds and stems, and, to a lower extent, in mature leaves, roots and opened flowers. Expressed in the leaf internal phloem-associated parenchyma (IPAP) inside the mesophyll.

It localises to the endoplasmic reticulum membrane. The catalysed reaction is 7-deoxyloganate + reduced [NADPH--hemoprotein reductase] + O2 = loganate + oxidized [NADPH--hemoprotein reductase] + H2O + H(+). The protein operates within alkaloid biosynthesis. Its function is as follows. Component of the seco-iridoid and derivatives monoterpenoid indole alkaloids (MIAs, e.g. vincristine, quinine, and strychnine) biosynthesis pathway. Catalyzes the conversion of 7-deoxyloganic acid into loganic acid. Not active on 7-deoxyloganetic acid. The sequence is that of 7-deoxyloganic acid hydroxylase from Catharanthus roseus (Madagascar periwinkle).